A 188-amino-acid polypeptide reads, in one-letter code: ATP synthase subunit delta (188 aa).

Belongs to the ATPase delta chain family. As to quaternary structure, F-type ATPases have 2 components, F(1) - the catalytic core - and F(0) - the membrane proton channel. F(1) has five subunits: alpha(3), beta(3), gamma(1), delta(1), epsilon(1). F(0) has three main subunits: a(1), b(2) and c(10-14). The alpha and beta chains form an alternating ring which encloses part of the gamma chain. F(1) is attached to F(0) by a central stalk formed by the gamma and epsilon chains, while a peripheral stalk is formed by the delta and b chains.

Its subcellular location is the cell inner membrane. Its function is as follows. F(1)F(0) ATP synthase produces ATP from ADP in the presence of a proton or sodium gradient. F-type ATPases consist of two structural domains, F(1) containing the extramembraneous catalytic core and F(0) containing the membrane proton channel, linked together by a central stalk and a peripheral stalk. During catalysis, ATP synthesis in the catalytic domain of F(1) is coupled via a rotary mechanism of the central stalk subunits to proton translocation. Functionally, this protein is part of the stalk that links CF(0) to CF(1). It either transmits conformational changes from CF(0) to CF(1) or is implicated in proton conduction. The sequence is that of ATP synthase subunit delta from Rhizobium etli (strain ATCC 51251 / DSM 11541 / JCM 21823 / NBRC 15573 / CFN 42).